The primary structure comprises 74 residues: Defensin Lc-def (74 aa).

An N-terminal signal peptide occupies residues 1-27; the sequence is MEKKTVAALSFLFIVLFVAQEIAVTEA. Cystine bridges form between Cys30–Cys74, Cys41–Cys62, Cys47–Cys68, and Cys51–Cys70.

The protein resides in the secreted. Functionally, has antifungal activity against the phytopathogenic fungus A.niger VKM F-2259, but not against A.alternata VKM F-3047. Does not inhibit trypsin or chymotrypsin. This Lens culinaris subsp. culinaris (Cultivated lentil) protein is Defensin Lc-def.